A 590-amino-acid chain; its full sequence is Leucine-rich repeat transmembrane neuronal protein 4 (590 aa).

The N-terminal stretch at 1–30 is a signal peptide; sequence MGFHLITQLKGMSVVLVLLPTLLLVMLTGA. The 31-residue stretch at 31–61 folds into the LRRNT domain; sequence QRACPKNCRCDGKIVYCESHAFADIPENISG. Residues 31-424 lie on the Extracellular side of the membrane; the sequence is QRACPKNCRC…QEYEHVSFHK (394 aa). N-linked (GlcNAc...) asparagine glycosylation is present at Asn58. 10 LRR repeats span residues 62-83, 86-107, 110-131, 134-155, 158-179, 182-203, 206-226, 230-251, 254-275, and 278-299; these read GSQG…QFAG, QLIW…AFQG, RLKE…TFHP, NLRN…QFKG, KLII…VFQD, NLDF…AFAG, KLKE…AHFP, NLRS…LTWT, SLHN…TFKC, and NLQK…TVNA. A glycan (N-linked (GlcNAc...) asparagine) is linked at Asn126. An N-linked (GlcNAc...) asparagine glycan is attached at Asn291. Positions 311-362 constitute an LRRCT domain; the sequence is NMWECSRSICPLFYWLKNFKGNKESTMICAGPKHIQGEKVSDAVETYNICSE. The chain crosses the membrane as a helical span at residues 425–445; the sequence is IIAGSVALFLSVAMILLVIYV. The Cytoplasmic portion of the chain corresponds to 446–590; the sequence is SWKRYPASMK…PAIYLERIAN (145 aa).

Belongs to the LRRTM family. In terms of assembly, peripherally associated with AMPAR complex. AMPAR complex consists of an inner core made of 4 pore-forming GluA/GRIA proteins (GRIA1, GRIA2, GRIA3 and GRIA4) and 4 major auxiliary subunits arranged in a twofold symmetry. One of the two pairs of distinct binding sites is occupied either by CNIH2, CNIH3 or CACNG2, CACNG3. The other harbors CACNG2, CACNG3, CACNG4, CACNG8 or GSG1L. This inner core of AMPAR complex is complemented by outer core constituents binding directly to the GluA/GRIA proteins at sites distinct from the interaction sites of the inner core constituents. Outer core constituents include at least PRRT1, PRRT2, CKAMP44/SHISA9, FRRS1L and NRN1. The proteins of the inner and outer core serve as a platform for other, more peripherally associated AMPAR constituents, including LRRTM4. Alone or in combination, these auxiliary subunits control the gating and pharmacology of the AMPAR complex and profoundly impact their biogenesis and protein processing. As to expression, expressed in neuronal tissues.

The protein resides in the cell membrane. It is found in the postsynaptic cell membrane. Functionally, may play a role in the development and maintenance of the vertebrate nervous system. Exhibits strong synaptogenic activity, restricted to excitatory presynaptic differentiation. The chain is Leucine-rich repeat transmembrane neuronal protein 4 (LRRTM4) from Homo sapiens (Human).